A 576-amino-acid polypeptide reads, in one-letter code: Citrinin biosynthesis transcriptional activator ctnR (576 aa).

The tract at residues 1–27 (MLSHEMASTAHRQPSRPTTRQRQRTGR) is disordered. Positions 29–56 (CEECRRRKLRCDGQQPRCGVCVDSGVTC) form a DNA-binding region, zn(2)-C6 fungal-type. Residues 102–148 (STPLTNDHHDGCSVSSASSRSDSNPPPTVSEPDMSLPNTTTSVSSAP) are disordered. The span at 114–124 (SVSSASSRSDS) shows a compositional bias: low complexity. Residues 137–148 (LPNTTTSVSSAP) show a composition bias toward polar residues.

The protein localises to the nucleus. Transcription factor that regulates the expression of the gene cluster that mediates the biosynthesis of the mycotoxin citrinin, a hepato-nephrotoxic compound to humans due to inhibition of respiration complex III. The sequence is that of Citrinin biosynthesis transcriptional activator ctnR from Monascus purpureus (Red mold).